The following is a 361-amino-acid chain: Probable mannitol dehydrogenase (361 aa).

The Zn(2+) site is built by Cys51, His73, Cys104, Cys107, Cys110, Cys118, and Cys167.

This sequence belongs to the zinc-containing alcohol dehydrogenase family. It depends on Zn(2+) as a cofactor.

It catalyses the reaction D-mannitol + NAD(+) = D-mannose + NADH + H(+). In terms of biological role, oxidizes mannitol to mannose. Provides the initial step by which translocated mannitol is committed to central metabolism and, by regulating mannitol pool size, is important in regulating salt tolerance at the cellular level. This chain is Probable mannitol dehydrogenase (ELI3), found in Mesembryanthemum crystallinum (Common ice plant).